The following is a 337-amino-acid chain: Methionyl-tRNA formyltransferase (337 aa).

110 to 113 (SLLP) provides a ligand contact to (6S)-5,6,7,8-tetrahydrofolate.

This sequence belongs to the Fmt family.

The enzyme catalyses L-methionyl-tRNA(fMet) + (6R)-10-formyltetrahydrofolate = N-formyl-L-methionyl-tRNA(fMet) + (6S)-5,6,7,8-tetrahydrofolate + H(+). In terms of biological role, attaches a formyl group to the free amino group of methionyl-tRNA(fMet). The formyl group appears to play a dual role in the initiator identity of N-formylmethionyl-tRNA by promoting its recognition by IF2 and preventing the misappropriation of this tRNA by the elongation apparatus. The protein is Methionyl-tRNA formyltransferase of Frankia casuarinae (strain DSM 45818 / CECT 9043 / HFP020203 / CcI3).